A 147-amino-acid polypeptide reads, in one-letter code: Deoxyuridine 5'-triphosphate nucleotidohydrolase (147 aa).

8 residues coordinate dUMP: Ser-69, Gly-82, Asp-85, Tyr-88, Lys-93, Arg-137, Phe-142, and Gly-143.

The protein belongs to the dUTPase family. As to quaternary structure, homotrimer. It depends on Mg(2+) as a cofactor.

The catalysed reaction is dUTP + H2O = dUMP + diphosphate + H(+). Its pathway is pyrimidine metabolism; dUMP biosynthesis; dUMP from dCTP (dUTP route): step 2/2. In terms of biological role, involved in nucleotide metabolism via production of dUMP, the immediate precursor of thymidine nucleotides, and decreases the intracellular concentration of dUTP so that uracil cannot be incorporated into DNA. Shows a significant activity against dITP, another potentially mutagenic nucleotide. The chain is Deoxyuridine 5'-triphosphate nucleotidohydrolase from Saccharomyces cerevisiae (strain ATCC 204508 / S288c) (Baker's yeast).